The chain runs to 350 residues: WD repeat-containing protein DWA2 (350 aa).

WD repeat units lie at residues 39 to 79 (KEEN…FDQR), 118 to 158 (AHVG…KSAE), 166 to 205 (GMRHSLSGGAWNPHDVNSVAATSESSIQFWDLRTMKKNNS), 206 to 246 (IERA…FPVQ), 250 to 290 (GHTH…EHKT), and 311 to 350 (DYEDSVYGLAWSSREPWIFASLSYDGRVVIESVKPFLPRR).

As to quaternary structure, interacts with ABI5 and DDB1A and DWA1.

It is found in the nucleus. It participates in protein modification; protein ubiquitination. Component of the CUL4-RBX1-DDB1-DWA1/DWA2 E3 ubiquitin-protein ligase complex that acts as a negative regulator in abscisic acid (ABA) signaling. May function as the substrate recognition module within this complex leading to ABI5 degradation. Functionally redundant with DWA1. In Arabidopsis thaliana (Mouse-ear cress), this protein is WD repeat-containing protein DWA2 (DWA2).